Consider the following 207-residue polypeptide: Thymidine kinase (207 aa).

Residues 15-22 (GCMFSGKS) and 88-91 (DEIQ) contribute to the ATP site. The active-site Proton acceptor is Glu89. Cys145, Cys148, Cys183, and His186 together coordinate Zn(2+). Over residues 184–198 (RHHHEVPGKPKKRYN) the composition is skewed to basic residues. The interval 184–207 (RHHHEVPGKPKKRYNHPLAGHTGE) is disordered.

It belongs to the thymidine kinase family. As to quaternary structure, homotetramer.

It is found in the cytoplasm. The catalysed reaction is thymidine + ATP = dTMP + ADP + H(+). This Geobacillus kaustophilus (strain HTA426) protein is Thymidine kinase.